The following is a 1117-amino-acid chain: DNA-directed RNA polymerase subunit beta (1117 aa).

Residues 1094–1117 (QLARRTPPRPTYESLSRESLDDDE) are disordered. A compositionally biased stretch (basic and acidic residues) spans 1108-1117 (LSRESLDDDE).

The protein belongs to the RNA polymerase beta chain family. As to quaternary structure, in cyanobacteria the RNAP catalytic core is composed of 2 alpha, 1 beta, 1 beta', 1 gamma and 1 omega subunit. When a sigma factor is associated with the core the holoenzyme is formed, which can initiate transcription.

The catalysed reaction is RNA(n) + a ribonucleoside 5'-triphosphate = RNA(n+1) + diphosphate. Its function is as follows. DNA-dependent RNA polymerase catalyzes the transcription of DNA into RNA using the four ribonucleoside triphosphates as substrates. This is DNA-directed RNA polymerase subunit beta from Trichormus variabilis (strain ATCC 29413 / PCC 7937) (Anabaena variabilis).